A 166-amino-acid polypeptide reads, in one-letter code: UPF0254 protein Mevan_0254 (166 aa).

This sequence belongs to the UPF0254 family.

In Methanococcus vannielii (strain ATCC 35089 / DSM 1224 / JCM 13029 / OCM 148 / SB), this protein is UPF0254 protein Mevan_0254.